Consider the following 376-residue polypeptide: Protein FhaE (376 aa).

The signal sequence occupies residues 1–37 (MSQIFADRRAAVPARVISFCGAALAVWAGLAVQPAMA).

The protein is Protein FhaE (fhaE) of Bordetella pertussis (strain Tohama I / ATCC BAA-589 / NCTC 13251).